Consider the following 221-residue polypeptide: Sperm acrosome membrane-associated protein 3 (221 aa).

The Cytoplasmic segment spans residues 1–69; the sequence is MGICMSMYTQ…EARSRAPRRQ (69 aa). The helical; Signal-anchor for type II membrane protein transmembrane segment at 70 to 90 threads the bilayer; sequence LCPPGITWLALAYLLSCLLAS. Topologically, residues 91–221 are extracellular; the sequence is SKAKVFSRCE…LSDWVDGCDF (131 aa). Residues 94 to 221 enclose the C-type lysozyme domain; it reads KVFSRCELAK…LSDWVDGCDF (128 aa). 4 cysteine pairs are disulfide-bonded: cysteine 99–cysteine 219, cysteine 123–cysteine 207, cysteine 157–cysteine 172, and cysteine 168–cysteine 186.

This sequence belongs to the glycosyl hydrolase 22 family. As to quaternary structure, interacts with ASTL. As to expression, the processed form is expressed in sperm (at protein level). Expressed strongly in testis and epididymis and weakly in pancreas.

It is found in the cytoplasmic vesicle. Its subcellular location is the secretory vesicle. It localises to the acrosome membrane. The protein resides in the secreted. In terms of biological role, sperm surface membrane protein that may be involved in sperm-egg plasma membrane adhesion and fusion during fertilization. It could be a potential receptor for the egg oligosaccharide residue N-acetylglucosamine, which is present in the extracellular matrix over the egg plasma membrane. The processed form has no detectable bacteriolytic activity in vitro. In Mus musculus (Mouse), this protein is Sperm acrosome membrane-associated protein 3 (Spaca3).